We begin with the raw amino-acid sequence, 121 residues long: Peptidyl-tRNA hydrolase (121 aa).

It belongs to the PTH2 family.

It is found in the cytoplasm. It catalyses the reaction an N-acyl-L-alpha-aminoacyl-tRNA + H2O = an N-acyl-L-amino acid + a tRNA + H(+). Its function is as follows. The natural substrate for this enzyme may be peptidyl-tRNAs which drop off the ribosome during protein synthesis. The sequence is that of Peptidyl-tRNA hydrolase from Staphylothermus marinus (strain ATCC 43588 / DSM 3639 / JCM 9404 / F1).